Consider the following 816-residue polypeptide: Phosphatidylinositol 4-kinase beta (816 aa).

Positions 1-30 (MGDTVVEPTPLKPTSESTPGPAGSNGGSLL) are disordered. Residue Gly-2 is modified to N-acetylglycine. Residues 2–68 (GDTVVEPTPL…VKLLHGGVAI (67 aa)) form an interaction with ACBD3 region. The PIK helical domain occupies 52-242 (CQEVLEKVKL…GTKLRKLILS (191 aa)). The tract at residues 248 to 318 (AHRKRELPSL…TESIDNSFSS (71 aa)) is disordered. Position 258 is a phosphoserine (Ser-258). Thr-263 is subject to Phosphothreonine. Phosphoserine occurs at positions 266, 275, 277, 284, and 294. Composition is skewed to polar residues over residues 278–297 (DATA…SNPK) and 306–318 (SSST…SFSS). Ser-428 is modified (phosphoserine). Thr-438 bears the Phosphothreonine mark. The residue at position 511 (Ser-511) is a Phosphoserine. 2 positions are modified to phosphothreonine: Thr-517 and Thr-519. The 267-residue stretch at 535-801 (EPWQEKVRRI…MVDGSMRSIT (267 aa)) folds into the PI3K/PI4K catalytic domain. Residues 541–547 (VRRIREG) form a G-loop region. Residues 668–676 (QVKDRHNGN) form a catalytic loop region. An activation loop region spans residues 687–711 (HIDFGFILSSSPRNLGFETSAFKLT).

The protein belongs to the PI3/PI4-kinase family. Type III PI4K subfamily. Interacts with ARF1 and ARF3 in the Golgi complex, but not with ARF4, ARF5 or ARF6. Interacts with NCS1/FREQ in a calcium-independent manner. Interacts with CALN1/CABP8 and CALN2/CABP7; in a calcium-dependent manner; this interaction competes with NCS1/FREQ binding. Interacts with ACBD3. Interacts with ARMH3, YWHAB, YWHAE, YWHAG, YWHAH, YWHAQ, YWHAZ and SFN. Interacts with GGA2 (via VHS domain); the interaction is important for PI4KB location at the Golgi apparatus membrane. Interacts with ATG9A. The cofactor is Mg(2+). Requires Mn(2+) as cofactor.

The protein localises to the endomembrane system. It is found in the mitochondrion outer membrane. It localises to the rough endoplasmic reticulum membrane. Its subcellular location is the golgi apparatus. The protein resides in the golgi apparatus membrane. It catalyses the reaction a 1,2-diacyl-sn-glycero-3-phospho-(1D-myo-inositol) + ATP = a 1,2-diacyl-sn-glycero-3-phospho-(1D-myo-inositol 4-phosphate) + ADP + H(+). With respect to regulation, inhibited by wortmannin. Increased kinase activity upon interaction with NCS1/FREQ. In terms of biological role, phosphorylates phosphatidylinositol (PI) in the first committed step in the production of the second messenger inositol-1,4,5,-trisphosphate (PIP). May regulate Golgi disintegration/reorganization during mitosis, possibly via its phosphorylation. Involved in Golgi-to-plasma membrane trafficking. May play an important role in the inner ear development. The chain is Phosphatidylinositol 4-kinase beta (PI4KB) from Otolemur garnettii (Small-eared galago).